The chain runs to 34 residues: Tryptophanase operon leader peptide (34 aa).

The protein is Tryptophanase operon leader peptide (tnaL) of Proteus vulgaris.